An 88-amino-acid polypeptide reads, in one-letter code: Large ribosomal subunit protein bL27 (88 aa).

Residues 1-21 (MAHKKGQGSTQNNRDSAGRRL) are disordered.

This sequence belongs to the bacterial ribosomal protein bL27 family.

This chain is Large ribosomal subunit protein bL27, found in Helicobacter pylori (strain P12).